Consider the following 155-residue polypeptide: Phosphopantetheine adenylyltransferase (155 aa).

It belongs to the eukaryotic CoaD family.

The protein localises to the cytoplasm. The catalysed reaction is (R)-4'-phosphopantetheine + ATP + H(+) = 3'-dephospho-CoA + diphosphate. It functions in the pathway cofactor biosynthesis; coenzyme A biosynthesis. Reversibly transfers an adenylyl group from ATP to 4'-phosphopantetheine, yielding dephospho-CoA (dPCoA) and pyrophosphate. This chain is Phosphopantetheine adenylyltransferase, found in Pyrobaculum aerophilum (strain ATCC 51768 / DSM 7523 / JCM 9630 / CIP 104966 / NBRC 100827 / IM2).